A 273-amino-acid polypeptide reads, in one-letter code: Ribosomal RNA small subunit methyltransferase A (273 aa).

6 residues coordinate S-adenosyl-L-methionine: asparagine 18, leucine 20, glycine 45, glutamate 66, aspartate 91, and asparagine 113.

This sequence belongs to the class I-like SAM-binding methyltransferase superfamily. rRNA adenine N(6)-methyltransferase family. RsmA subfamily.

It localises to the cytoplasm. The enzyme catalyses adenosine(1518)/adenosine(1519) in 16S rRNA + 4 S-adenosyl-L-methionine = N(6)-dimethyladenosine(1518)/N(6)-dimethyladenosine(1519) in 16S rRNA + 4 S-adenosyl-L-homocysteine + 4 H(+). Functionally, specifically dimethylates two adjacent adenosines (A1518 and A1519) in the loop of a conserved hairpin near the 3'-end of 16S rRNA in the 30S particle. May play a critical role in biogenesis of 30S subunits. This Escherichia coli O157:H7 protein is Ribosomal RNA small subunit methyltransferase A.